Here is a 395-residue protein sequence, read N- to C-terminus: Mitogen-activated protein kinase 6 (395 aa).

The interval 1 to 35 (MDGGSGQPAADTEMTEAPGGFPAAAPSPQMPGIEN) is disordered. Low complexity predominate over residues 17 to 27 (APGGFPAAAPS). The region spanning 63–348 (KPPIMPIGKG…VLDALAHPYL (286 aa)) is the Protein kinase domain. ATP-binding positions include 69 to 77 (IGKGAYGIV) and Lys-92. Asp-189 functions as the Proton acceptor in the catalytic mechanism. Thr-221 is subject to Phosphothreonine. Positions 221 to 223 (TEY) match the TXY motif. Tyr-223 bears the Phosphotyrosine mark. Thr-226 is modified (phosphothreonine).

Belongs to the protein kinase superfamily. CMGC Ser/Thr protein kinase family. MAP kinase subfamily. In terms of assembly, interacts with MEKK1, MKK1 and MKK2. May form a ternary complex with MEKK1 and MKK1 or MKK2. Interacts with NDPK2, AP2C1, MKP1 and PTP1. Interacts with DSPTP1B/MKP2, especially during HR-like responses triggered by fungal elicitors. Interacts with MKK4, MKK5 and MKK6. Binds to LIP5. Interacts with VQ4 and IKU1/VQ14. Interacts with RACK1A, RACK1B and RACK1C. Interacts with PTP1. Interacts with FLZ9. Binds to BASL and YDA. Dually phosphorylated on Thr-221 and Tyr-223, which activates the enzyme. Dephosphorylated by DSPTP1B/MKP2.

It localises to the cytoplasm. The protein localises to the nucleus. The protein resides in the cell cortex. The enzyme catalyses L-seryl-[protein] + ATP = O-phospho-L-seryl-[protein] + ADP + H(+). It carries out the reaction L-threonyl-[protein] + ATP = O-phospho-L-threonyl-[protein] + ADP + H(+). Activated by threonine and tyrosine phosphorylation. Activated by the MAP kinase kinases MKK2, MKK3, MKK4, MKK5, MKK7 and MKK9. Activated in response to touch, wounding, low temperature, low humidity, salt stress, hydrogen peroxide, ozone, ACC (an ethylene precursor), jasmonic acid (JA), mastoparan and UVC. Activated in response to elicitors: oligogalacturonides, hexameric chitin fragments, fungal xylanase, and the bacterial flagellin and harpin. Activated upon Pseudomonas syringae pv. tomato DC3000 infection. Repressed by the protein phosphatase 2C AP2C1 and the protein-tyrosine-phosphatases MKP1 and PTP1. Repressed by DSPTP1B/MKP2-mediated dephosphorylation. Activated by polarized BASL. Triggered by MKKK20 in response to various abiotic stresses, including osmotic stress, cold and reactive oxygen species (ROS). Activated by MKK5 in response to abscisic acid (ABA). Its function is as follows. Mitogen-activated protein kinase (MAPK) which regulates abscisic acid (ABA) responses in a MAPKKK20-MKK5-MPK6 cascade involved in root growth (e.g. root cell division and elongation) and stomatal response. Involved in oxidative stress-mediated signaling cascade (such as ozone). Involved in the innate immune MAP kinase signaling cascade (MEKK1, MKK4/MKK5 and MPK3/MPK6) downstream of bacterial flagellin receptor FLS2. May be involved in hypersensitive response (HR)-mediated signaling cascade by modulating LIP5 phosphorylation and subsequent multivesicular bodies (MVBs) trafficking. May phosphorylate regulators of WRKY transcription factors. Phosphorylates 1-aminocyclopropane-1-carboxylic acid synthases (ACS2 and ACS6) and may be involved in the regulation of bacterial elicitor flagellin-induced ethylene production. Regulates locally gene-mediated and basal resistance response to certain pathogens. May be involved in the cold and salinity stress-mediated MAP kinase signaling cascade (MEKK1, MKK1/MKK2 and MPK4/MPK6). MKK1-MPK6 module mediates abscisic acid (ABA)-dependent CAT1 expression with H(2)O(2) production and response to drought and salt stress. MKK1-MPK6 module is also involved in sugar signaling during the process of seed germination. MKK3-MPK6 module plays an important role in the jasmonate signal transduction pathway through the negative regulation of MYC2/JIN1 expression. MKK9-MPK3/MPK6 module phosphorylates and activates EIN3, leading to the promotion of EIN3-mediated transcription in ethylene signaling. MPK3/MPK6 cascade regulates camalexin synthesis through transcriptional regulation of the biosynthetic genes after pathogen infection. MKK9-MPK6 module positively regulates leaf senescence. YDA-MKK4/MKK5-MPK3/MPK6 module regulates stomatal cell fate before the guard mother cell (GMC) is specified. When activated, reinforces the feedback loop by phosphorylating BASL, and inhibits stomatal fate by phosphorylating SPCH. This MAPK cascade also functions downstream of the ER receptor in regulating coordinated local cell proliferation, which shapes the morphology of plant organs. The sequence is that of Mitogen-activated protein kinase 6 from Arabidopsis thaliana (Mouse-ear cress).